A 339-amino-acid polypeptide reads, in one-letter code: Ribosomal RNA small subunit methyltransferase C (339 aa).

Belongs to the methyltransferase superfamily. RsmC family. As to quaternary structure, monomer.

The protein resides in the cytoplasm. The enzyme catalyses guanosine(1207) in 16S rRNA + S-adenosyl-L-methionine = N(2)-methylguanosine(1207) in 16S rRNA + S-adenosyl-L-homocysteine + H(+). Its function is as follows. Specifically methylates the guanine in position 1207 of 16S rRNA in the 30S particle. The polypeptide is Ribosomal RNA small subunit methyltransferase C (Photobacterium profundum (strain SS9)).